Here is a 263-residue protein sequence, read N- to C-terminus: Indole-3-glycerol phosphate synthase (263 aa).

Belongs to the TrpC family.

The catalysed reaction is 1-(2-carboxyphenylamino)-1-deoxy-D-ribulose 5-phosphate + H(+) = (1S,2R)-1-C-(indol-3-yl)glycerol 3-phosphate + CO2 + H2O. The protein operates within amino-acid biosynthesis; L-tryptophan biosynthesis; L-tryptophan from chorismate: step 4/5. The polypeptide is Indole-3-glycerol phosphate synthase (Laribacter hongkongensis (strain HLHK9)).